Here is a 436-residue protein sequence, read N- to C-terminus: Trigger factor (436 aa).

One can recognise a PPIase FKBP-type domain in the interval 163 to 248; it reads GDRVTVDFEG…LKKIEAAHLP (86 aa).

It belongs to the FKBP-type PPIase family. Tig subfamily.

It is found in the cytoplasm. The enzyme catalyses [protein]-peptidylproline (omega=180) = [protein]-peptidylproline (omega=0). In terms of biological role, involved in protein export. Acts as a chaperone by maintaining the newly synthesized protein in an open conformation. Functions as a peptidyl-prolyl cis-trans isomerase. The sequence is that of Trigger factor from Albidiferax ferrireducens (strain ATCC BAA-621 / DSM 15236 / T118) (Rhodoferax ferrireducens).